The chain runs to 94 residues: Cytochrome c-551 (94 aa).

An N-terminal signal peptide occupies residues 1 to 14; it reads MAFTAMTVAPSALA. Cys-24, Cys-27, His-28, and Met-73 together coordinate heme c.

Binds 1 heme c group covalently per subunit.

Efficiently couple electron transfer between the cytochrome bc1 complex and the photosynthetic reaction center. The sequence is that of Cytochrome c-551 from Allochromatium vinosum (strain ATCC 17899 / DSM 180 / NBRC 103801 / NCIMB 10441 / D) (Chromatium vinosum).